The primary structure comprises 304 residues: Acetyl-coenzyme A carboxylase carboxyl transferase subunit beta (304 aa).

Residues 29 to 298 (LWTKCVSCAA…QAYRPSPQAS (270 aa)) form the CoA carboxyltransferase N-terminal domain. Residues Cys33, Cys36, Cys52, and Cys55 each contribute to the Zn(2+) site. The segment at 33–55 (CVSCAALHYTKDFQLNLCVCPAC) adopts a C4-type zinc-finger fold.

Belongs to the AccD/PCCB family. In terms of assembly, acetyl-CoA carboxylase is a heterohexamer composed of biotin carboxyl carrier protein (AccB), biotin carboxylase (AccC) and two subunits each of ACCase subunit alpha (AccA) and ACCase subunit beta (AccD). It depends on Zn(2+) as a cofactor.

It localises to the cytoplasm. It carries out the reaction N(6)-carboxybiotinyl-L-lysyl-[protein] + acetyl-CoA = N(6)-biotinyl-L-lysyl-[protein] + malonyl-CoA. The protein operates within lipid metabolism; malonyl-CoA biosynthesis; malonyl-CoA from acetyl-CoA: step 1/1. Its function is as follows. Component of the acetyl coenzyme A carboxylase (ACC) complex. Biotin carboxylase (BC) catalyzes the carboxylation of biotin on its carrier protein (BCCP) and then the CO(2) group is transferred by the transcarboxylase to acetyl-CoA to form malonyl-CoA. This is Acetyl-coenzyme A carboxylase carboxyl transferase subunit beta from Gloeobacter violaceus (strain ATCC 29082 / PCC 7421).